An 81-amino-acid chain; its full sequence is Photosystem I iron-sulfur center (81 aa).

4Fe-4S ferredoxin-type domains are found at residues 2–31 (SHSV…MVPW) and 39–68 (IASA…VRVY). Positions 11, 14, 17, 21, 48, 51, 54, and 58 each coordinate [4Fe-4S] cluster.

The eukaryotic PSI reaction center is composed of at least 11 subunits. [4Fe-4S] cluster is required as a cofactor.

It is found in the plastid. Its subcellular location is the chloroplast thylakoid membrane. It carries out the reaction reduced [plastocyanin] + hnu + oxidized [2Fe-2S]-[ferredoxin] = oxidized [plastocyanin] + reduced [2Fe-2S]-[ferredoxin]. Apoprotein for the two 4Fe-4S centers FA and FB of photosystem I (PSI); essential for photochemical activity. FB is the terminal electron acceptor of PSI, donating electrons to ferredoxin. The C-terminus interacts with PsaA/B/D and helps assemble the protein into the PSI complex. Required for binding of PsaD and PsaE to PSI. PSI is a plastocyanin/cytochrome c6-ferredoxin oxidoreductase, converting photonic excitation into a charge separation, which transfers an electron from the donor P700 chlorophyll pair to the spectroscopically characterized acceptors A0, A1, FX, FA and FB in turn. The sequence is that of Photosystem I iron-sulfur center from Pleurastrum terricola (Filamentous green alga).